A 1295-amino-acid polypeptide reads, in one-letter code: Phosphoribosylformylglycinamidine synthase (1295 aa).

A disordered region spans residues 305–327 (WPGAATGSGGEIRDEGATGRGAK). ATP-binding positions include 307 to 318 (GAATGSGGEIRD), 386 to 388 (TGY), and A678. Mg(2+) contacts are provided by D679, E718, N722, and D884. S886 is a binding site for ATP. Residues 1042–1295 (VAVLREQGVN…IFRNARKQLG (254 aa)) enclose the Glutamine amidotransferase type-1 domain. C1135 (nucleophile) is an active-site residue. Catalysis depends on residues H1260 and E1262.

In the N-terminal section; belongs to the FGAMS family. In terms of assembly, monomer.

The protein resides in the cytoplasm. The catalysed reaction is N(2)-formyl-N(1)-(5-phospho-beta-D-ribosyl)glycinamide + L-glutamine + ATP + H2O = 2-formamido-N(1)-(5-O-phospho-beta-D-ribosyl)acetamidine + L-glutamate + ADP + phosphate + H(+). It functions in the pathway purine metabolism; IMP biosynthesis via de novo pathway; 5-amino-1-(5-phospho-D-ribosyl)imidazole from N(2)-formyl-N(1)-(5-phospho-D-ribosyl)glycinamide: step 1/2. Functionally, phosphoribosylformylglycinamidine synthase involved in the purines biosynthetic pathway. Catalyzes the ATP-dependent conversion of formylglycinamide ribonucleotide (FGAR) and glutamine to yield formylglycinamidine ribonucleotide (FGAM) and glutamate. The polypeptide is Phosphoribosylformylglycinamidine synthase (Salmonella typhi).